The primary structure comprises 445 residues: Lipoyl synthase, mitochondrial (445 aa).

A mitochondrion-targeting transit peptide spans 1–40 (MRPGSWRVITHYGFTGPIQRLQAPLRRSLARAAALSTRSY). Residues 42 to 71 (TIPSAPSSQPTSQESSPAASASASASAPAT) are compositionally biased toward low complexity. Positions 42–77 (TIPSAPSSQPTSQESSPAASASASASAPATKPRPTY) are disordered. [4Fe-4S] cluster is bound by residues Cys157, Cys162, Cys168, Cys188, Cys192, Cys195, and Ser405. Residues 171-394 (GSNKAAATAT…RQRALDMGFL (224 aa)) form the Radical SAM core domain.

This sequence belongs to the radical SAM superfamily. Lipoyl synthase family. It depends on [4Fe-4S] cluster as a cofactor.

The protein localises to the mitochondrion. The catalysed reaction is [[Fe-S] cluster scaffold protein carrying a second [4Fe-4S](2+) cluster] + N(6)-octanoyl-L-lysyl-[protein] + 2 oxidized [2Fe-2S]-[ferredoxin] + 2 S-adenosyl-L-methionine + 4 H(+) = [[Fe-S] cluster scaffold protein] + N(6)-[(R)-dihydrolipoyl]-L-lysyl-[protein] + 4 Fe(3+) + 2 hydrogen sulfide + 2 5'-deoxyadenosine + 2 L-methionine + 2 reduced [2Fe-2S]-[ferredoxin]. It functions in the pathway protein modification; protein lipoylation via endogenous pathway; protein N(6)-(lipoyl)lysine from octanoyl-[acyl-carrier-protein]: step 2/2. Functionally, catalyzes the radical-mediated insertion of two sulfur atoms into the C-6 and C-8 positions of the octanoyl moiety bound to the lipoyl domains of lipoate-dependent enzymes, thereby converting the octanoylated domains into lipoylated derivatives. The polypeptide is Lipoyl synthase, mitochondrial (Sordaria macrospora (strain ATCC MYA-333 / DSM 997 / K(L3346) / K-hell)).